Reading from the N-terminus, the 399-residue chain is MATTLATDVRLSIAHQTRFALRLASTISSNPKSAASNAAFSPVSLHSALSLLAAGAGSATRDQLVATLGTGEVEGGHALAEQVVQFVLADASSAGGPRVAFANGVFVDASLLLKPSFQELAVCKYKAETQSVDFQTKAAEVTTQVNSWVEKVTSGRIKNILPSGSVDNTTKLVLANALYFKGAWTDQFDSYGTKNDYFYLLDGSSVQTPFMSSMDDDQYISSSDGLKVLKLPYKQGGDNRQFSMYILLPEAPGGLSSLAEKLSAEPDFLERHIPRQRVAIRQFKLPKFKISFGMEASDLLKCLGLQLPFSDEADFSEMVDSPMPQGLRVSSVFHQAFVEVNEQGTEAAASTAIKMVPQQARPPSVMDFIADHPFLFLLREDISGVVLFMGHVVNPLLSS.

An RCL region spans residues Gly344–Phe368.

It belongs to the serpin family.

Its function is as follows. Inhibits chymotrypsin and cathepsin G in vitro. The polypeptide is Serpin-Z1B (Triticum aestivum (Wheat)).